A 288-amino-acid chain; its full sequence is Energy-coupling factor transporter ATP-binding protein EcfA2 (288 aa).

An ABC transporter domain is found at 3-246 (IKLEQLGYCY…PDALVDLGLS (244 aa)). 40–47 (GHTGSGKS) contributes to the ATP binding site.

The protein belongs to the ABC transporter superfamily. Energy-coupling factor EcfA family. In terms of assembly, forms a stable energy-coupling factor (ECF) transporter complex composed of 2 membrane-embedded substrate-binding proteins (S component), 2 ATP-binding proteins (A component) and 2 transmembrane proteins (T component).

It localises to the cell membrane. In terms of biological role, ATP-binding (A) component of a common energy-coupling factor (ECF) ABC-transporter complex. Unlike classic ABC transporters this ECF transporter provides the energy necessary to transport a number of different substrates. The sequence is that of Energy-coupling factor transporter ATP-binding protein EcfA2 from Listeria welshimeri serovar 6b (strain ATCC 35897 / DSM 20650 / CCUG 15529 / CIP 8149 / NCTC 11857 / SLCC 5334 / V8).